The sequence spans 88 residues: Small ribosomal subunit protein bS20 (88 aa).

Residues 1 to 27 (MANIPSAKKRARQAEKRRKHNQSQRSM) are disordered. The span at 7-22 (AKKRARQAEKRRKHNQ) shows a compositional bias: basic residues.

Belongs to the bacterial ribosomal protein bS20 family.

Its function is as follows. Binds directly to 16S ribosomal RNA. This is Small ribosomal subunit protein bS20 from Alkalilimnicola ehrlichii (strain ATCC BAA-1101 / DSM 17681 / MLHE-1).